A 226-amino-acid polypeptide reads, in one-letter code: tRNA (guanine-N(7)-)-methyltransferase (226 aa).

The tract at residues 1–22 (MTTPQQPHGPLRSFGRLKSRPV) is disordered. 4 residues coordinate S-adenosyl-L-methionine: E59, E84, D111, and D133. Residue D133 is part of the active site. K137 provides a ligand contact to substrate. The interval 139–144 (RHNKRR) is interaction with RNA. Substrate contacts are provided by residues D169 and 206–209 (TRYE).

It belongs to the class I-like SAM-binding methyltransferase superfamily. TrmB family.

The catalysed reaction is guanosine(46) in tRNA + S-adenosyl-L-methionine = N(7)-methylguanosine(46) in tRNA + S-adenosyl-L-homocysteine. It functions in the pathway tRNA modification; N(7)-methylguanine-tRNA biosynthesis. In terms of biological role, catalyzes the formation of N(7)-methylguanine at position 46 (m7G46) in tRNA. This Caulobacter vibrioides (strain ATCC 19089 / CIP 103742 / CB 15) (Caulobacter crescentus) protein is tRNA (guanine-N(7)-)-methyltransferase.